The primary structure comprises 225 residues: 7-cyano-7-deazaguanine synthase (225 aa).

Residue 10-20 participates in ATP binding; sequence LSGGIDSATAA. Residues Cys191, Cys199, Cys202, and Cys205 each coordinate Zn(2+).

Belongs to the QueC family. Zn(2+) serves as cofactor.

It catalyses the reaction 7-carboxy-7-deazaguanine + NH4(+) + ATP = 7-cyano-7-deazaguanine + ADP + phosphate + H2O + H(+). Its pathway is purine metabolism; 7-cyano-7-deazaguanine biosynthesis. Functionally, catalyzes the ATP-dependent conversion of 7-carboxy-7-deazaguanine (CDG) to 7-cyano-7-deazaguanine (preQ(0)). The chain is 7-cyano-7-deazaguanine synthase from Prochlorococcus marinus (strain NATL1A).